The following is a 532-amino-acid chain: Copalyl diphosphate synthase (532 aa).

The short motif at 313–318 is the DXDDTA motif element; that stretch reads DTDDTA. The short motif at 443–449 is the QXXDGSW motif element; sequence QSDDGSW.

It belongs to the terpene synthase family. It depends on Mg(2+) as a cofactor.

It catalyses the reaction (2E,6E,10E)-geranylgeranyl diphosphate = (+)-copalyl diphosphate. Functionally, involved in the biosynthesis of the mercapturic acid derivative diterpene cyslabdan A, a potentiator of the beta-lactam antibiotic imipenem. Catalyzes the conversion of geranylgeranyl diphosphate (GGDP) into (+)-copalyl diphosphate. The sequence is that of Copalyl diphosphate synthase from Streptomyces cyslabdanicus.